Consider the following 423-residue polypeptide: Serine--tRNA ligase (423 aa).

230–232 (TAE) provides a ligand contact to L-serine. 261-263 (RAE) contacts ATP. L-serine is bound at residue Glu284. 348 to 351 (EISS) lines the ATP pocket. Ser384 lines the L-serine pocket.

The protein belongs to the class-II aminoacyl-tRNA synthetase family. Type-1 seryl-tRNA synthetase subfamily. As to quaternary structure, homodimer. The tRNA molecule binds across the dimer.

The protein localises to the cytoplasm. The enzyme catalyses tRNA(Ser) + L-serine + ATP = L-seryl-tRNA(Ser) + AMP + diphosphate + H(+). The catalysed reaction is tRNA(Sec) + L-serine + ATP = L-seryl-tRNA(Sec) + AMP + diphosphate + H(+). It participates in aminoacyl-tRNA biosynthesis; selenocysteinyl-tRNA(Sec) biosynthesis; L-seryl-tRNA(Sec) from L-serine and tRNA(Sec): step 1/1. Functionally, catalyzes the attachment of serine to tRNA(Ser). Is also able to aminoacylate tRNA(Sec) with serine, to form the misacylated tRNA L-seryl-tRNA(Sec), which will be further converted into selenocysteinyl-tRNA(Sec). The chain is Serine--tRNA ligase from Acetivibrio thermocellus (strain ATCC 27405 / DSM 1237 / JCM 9322 / NBRC 103400 / NCIMB 10682 / NRRL B-4536 / VPI 7372) (Clostridium thermocellum).